Here is a 387-residue protein sequence, read N- to C-terminus: Succinate--CoA ligase [ADP-forming] subunit beta (387 aa).

In terms of domain architecture, ATP-grasp spans 9 to 236 (KELFAKHNVP…RAATDPLELK (228 aa)). Residues K45, 52-54 (GRG), S94, and E99 contribute to the ATP site. Mg(2+) is bound by residues N191 and D205. Residues N256 and 318–320 (GIT) contribute to the substrate site.

This sequence belongs to the succinate/malate CoA ligase beta subunit family. In terms of assembly, heterotetramer of two alpha and two beta subunits. The cofactor is Mg(2+).

The catalysed reaction is succinate + ATP + CoA = succinyl-CoA + ADP + phosphate. It carries out the reaction GTP + succinate + CoA = succinyl-CoA + GDP + phosphate. Its pathway is carbohydrate metabolism; tricarboxylic acid cycle; succinate from succinyl-CoA (ligase route): step 1/1. In terms of biological role, succinyl-CoA synthetase functions in the citric acid cycle (TCA), coupling the hydrolysis of succinyl-CoA to the synthesis of either ATP or GTP and thus represents the only step of substrate-level phosphorylation in the TCA. The beta subunit provides nucleotide specificity of the enzyme and binds the substrate succinate, while the binding sites for coenzyme A and phosphate are found in the alpha subunit. The chain is Succinate--CoA ligase [ADP-forming] subunit beta from Mycobacterium tuberculosis (strain CDC 1551 / Oshkosh).